The following is a 243-amino-acid chain: Zinc import ATP-binding protein ZnuC (243 aa).

An ABC transporter domain is found at 8 to 225 (LNLSNVSYYI…SEFQKLFGHH (218 aa)). 40–47 (GPNGAGKS) is a binding site for ATP.

This sequence belongs to the ABC transporter superfamily. Zinc importer (TC 3.A.1.15.5) family. As to quaternary structure, the complex is composed of two ATP-binding proteins (ZnuC), two transmembrane proteins (ZnuB) and a solute-binding protein (ZnuA).

The protein localises to the cell inner membrane. The enzyme catalyses Zn(2+)(out) + ATP(in) + H2O(in) = Zn(2+)(in) + ADP(in) + phosphate(in) + H(+)(in). In terms of biological role, part of the ABC transporter complex ZnuABC involved in zinc import. Responsible for energy coupling to the transport system. The polypeptide is Zinc import ATP-binding protein ZnuC (Psychrobacter arcticus (strain DSM 17307 / VKM B-2377 / 273-4)).